A 224-amino-acid polypeptide reads, in one-letter code: Probable octanoyltransferase (224 aa).

The BPL/LPL catalytic domain maps to 28–199 (GLTGDIALVT…KLALELGLTP (172 aa)). Residues 66 to 73 (RGGDATYH), 130 to 132 (SIG), and 143 to 145 (GVA) each bind substrate. Residue C161 is the Acyl-thioester intermediate of the active site.

It belongs to the LipB family.

The protein localises to the cytoplasm. The catalysed reaction is octanoyl-[ACP] + L-lysyl-[protein] = N(6)-octanoyl-L-lysyl-[protein] + holo-[ACP] + H(+). It functions in the pathway protein modification; protein lipoylation via endogenous pathway; protein N(6)-(lipoyl)lysine from octanoyl-[acyl-carrier-protein]: step 1/2. In terms of biological role, catalyzes the transfer of endogenously produced octanoic acid from octanoyl-acyl-carrier-protein onto the lipoyl domains of lipoate-dependent enzymes. Lipoyl-ACP can also act as a substrate although octanoyl-ACP is likely to be the physiological substrate. In Pyrobaculum aerophilum (strain ATCC 51768 / DSM 7523 / JCM 9630 / CIP 104966 / NBRC 100827 / IM2), this protein is Probable octanoyltransferase.